The following is a 53-amino-acid chain: Conotoxin Cal22e (53 aa).

The propeptide occupies 1–5 (GRPSA).

In terms of processing, contains 4 disulfide bonds. As to expression, expressed by the venom duct.

Its subcellular location is the secreted. Its function is as follows. Probable neurotoxin with unknown target. Possibly targets ion channels. The chain is Conotoxin Cal22e from Californiconus californicus (California cone).